The chain runs to 445 residues: Probable fructoselysine/psicoselysine transporter FrlA (445 aa).

Transmembrane regions (helical) follow at residues L10 to V32, A39 to C61, F97 to L119, L126 to L143, Q153 to F175, I188 to G210, R230 to G252, W272 to G294, G341 to F363, L384 to A406, and W411 to F433.

It belongs to the amino acid-polyamine-organocation (APC) superfamily.

It localises to the cell inner membrane. The catalysed reaction is N(6)-(D-fructosyl)-L-lysine(in) = N(6)-(D-fructosyl)-L-lysine(out). It carries out the reaction N(6)-(D-psicosyl)-L-lysine(in) = N(6)-(D-psicosyl)-L-lysine(out). The protein operates within carbohydrate metabolism; fructoselysine degradation. In terms of biological role, is likely involved in the transport of fructoselysine and psicoselysine to the cytoplasm, where they are degraded. The protein is Probable fructoselysine/psicoselysine transporter FrlA (frlA) of Escherichia coli O157:H7.